A 503-amino-acid chain; its full sequence is ATP synthase subunit beta (503 aa).

Residue 157–164 coordinates ATP; that stretch reads GGAGVGKT.

The protein belongs to the ATPase alpha/beta chains family. F-type ATPases have 2 components, CF(1) - the catalytic core - and CF(0) - the membrane proton channel. CF(1) has five subunits: alpha(3), beta(3), gamma(1), delta(1), epsilon(1). CF(0) has three main subunits: a(1), b(2) and c(9-12). The alpha and beta chains form an alternating ring which encloses part of the gamma chain. CF(1) is attached to CF(0) by a central stalk formed by the gamma and epsilon chains, while a peripheral stalk is formed by the delta and b chains.

Its subcellular location is the cell inner membrane. It catalyses the reaction ATP + H2O + 4 H(+)(in) = ADP + phosphate + 5 H(+)(out). Its function is as follows. Produces ATP from ADP in the presence of a proton gradient across the membrane. The catalytic sites are hosted primarily by the beta subunits. The chain is ATP synthase subunit beta from Flavobacterium johnsoniae (strain ATCC 17061 / DSM 2064 / JCM 8514 / BCRC 14874 / CCUG 350202 / NBRC 14942 / NCIMB 11054 / UW101) (Cytophaga johnsonae).